Here is a 314-residue protein sequence, read N- to C-terminus: Ribosomal RNA small subunit methyltransferase H (314 aa).

Residues 34-36, Asp-54, Phe-83, Asp-104, and Gln-111 contribute to the S-adenosyl-L-methionine site; that span reads GGH.

It belongs to the methyltransferase superfamily. RsmH family.

The protein localises to the cytoplasm. The enzyme catalyses cytidine(1402) in 16S rRNA + S-adenosyl-L-methionine = N(4)-methylcytidine(1402) in 16S rRNA + S-adenosyl-L-homocysteine + H(+). In terms of biological role, specifically methylates the N4 position of cytidine in position 1402 (C1402) of 16S rRNA. This Ligilactobacillus salivarius (strain UCC118) (Lactobacillus salivarius) protein is Ribosomal RNA small subunit methyltransferase H.